Reading from the N-terminus, the 758-residue chain is Meiotic driver SPOK4 (758 aa).

Residues 4–41 are a coiled coil; that stretch reads KDRITQLLRKLEEAKAREEEAKAREAQERCEKERLQLE. 2 disordered regions span residues 180-230 and 414-499; these read ELTQ…GVGI and LSSA…MADP. The span at 181-190 shows a compositional bias: basic and acidic residues; it reads LTQEDDRSSG. Polar residues predominate over residues 416 to 429; it reads SAASSQNTENSEYT. Basic and acidic residues predominate over residues 457-468; it reads NEHDEHDEDHSE.

It localises to the cytoplasm. The protein localises to the nucleus. Functionally, promotes unequal transmission of alleles from the parental zygote to progeny spores by acting as poison/antidote system, leading to poisoning of progeny that do not inherit the allele. May possess DNA nuclease activity that leads to spore killing, and a kinase activity that confers resistance to the nuclease activity. Can suppress meiotic drive by the P.comata SPOK1 protein. This Podospora anserina (Pleurage anserina) protein is Meiotic driver SPOK4.